An 88-amino-acid chain; its full sequence is Large ribosomal subunit protein bL27 (88 aa).

Belongs to the bacterial ribosomal protein bL27 family.

The sequence is that of Large ribosomal subunit protein bL27 from Mycobacterium leprae (strain TN).